A 93-amino-acid polypeptide reads, in one-letter code: Small ribosomal subunit protein uS19m (93 aa).

It belongs to the universal ribosomal protein uS19 family.

The protein resides in the mitochondrion. This is Small ribosomal subunit protein uS19m (RPS19) from Marchantia polymorpha (Common liverwort).